A 466-amino-acid chain; its full sequence is Glycine--tRNA ligase (466 aa).

Residues arginine 104 and glutamate 178 each contribute to the substrate site. Residues 210 to 212 (RNE), 220 to 225 (FRTREF), 294 to 295 (EL), and 338 to 341 (GADR) contribute to the ATP site. 225-229 (FEQME) provides a ligand contact to substrate. Position 334-338 (334-338 (EPSLG)) interacts with substrate.

This sequence belongs to the class-II aminoacyl-tRNA synthetase family. In terms of assembly, homodimer.

It localises to the cytoplasm. It carries out the reaction tRNA(Gly) + glycine + ATP = glycyl-tRNA(Gly) + AMP + diphosphate. Its function is as follows. Catalyzes the attachment of glycine to tRNA(Gly). In Geobacillus thermodenitrificans (strain NG80-2), this protein is Glycine--tRNA ligase.